The chain runs to 353 residues: uncharacterized protein (353 aa).

This sequence belongs to the mimivirus L17x/L18x family.

This is an uncharacterized protein from Acanthamoeba polyphaga (Amoeba).